We begin with the raw amino-acid sequence, 311 residues long: Malate dehydrogenase (311 aa).

Residues 7-12 (GAGNVG) and D32 each bind NAD(+). R82 and R88 together coordinate substrate. Residues N95 and 118–120 (VSN) each bind NAD(+). Residues N120 and R151 each contribute to the substrate site. The active-site Proton acceptor is H175.

This sequence belongs to the LDH/MDH superfamily. MDH type 3 family. In terms of assembly, homotetramer.

It carries out the reaction (S)-malate + NAD(+) = oxaloacetate + NADH + H(+). With respect to regulation, strongly inhibited by iodoacetic acid and CuCl(2). Completely inhibited by N-ethylmaleimide and HgCl(2). Its function is as follows. Catalyzes the reversible oxidation of malate to oxaloacetate. Can use both NAD and NADP for malate oxidation, but NADPH cannot be used for oxaloacetate reduction. The polypeptide is Malate dehydrogenase (Flavobacterium frigidimaris).